The primary structure comprises 256 residues: Ras-related protein RabJ (256 aa).

16 to 23 contributes to the GTP binding site; sequence GSSDVGKT. Residues 38 to 46 carry the Effector region motif; it reads LTSTIGASF. Residues 64-68 and 122-125 each bind GTP; these read DSAGQ and NKID. The tract at residues 229–256 is disordered; the sequence is NGHLQGSINGHNNQNSTNYSDNSDQCCG. A compositionally biased stretch (polar residues) spans 230–256; sequence GHLQGSINGHNNQNSTNYSDNSDQCCG. Residues cysteine 254 and cysteine 255 are each lipidated (S-geranylgeranyl cysteine).

This sequence belongs to the small GTPase superfamily. Rab family.

Its subcellular location is the cell membrane. The chain is Ras-related protein RabJ (rabJ) from Dictyostelium discoideum (Social amoeba).